The sequence spans 410 residues: Histone-lysine N-methyltransferase SUV39H2 (410 aa).

Residues Tyr-47 to Lys-105 enclose the Chromo domain. The region spanning Phe-189–Gly-247 is the Pre-SET domain. Residues Cys-191, Cys-193, Cys-196, Cys-201, Cys-202, Cys-229, Cys-233, Cys-235, and Cys-239 each coordinate Zn(2+). The 124-residue stretch at Tyr-250–Gln-373 folds into the SET domain. S-adenosyl-L-methionine contacts are provided by residues Arg-261–Trp-263, Tyr-304, and Asn-330–His-331. Cys-333 serves as a coordination point for Zn(2+). Phosphoserine is present on residues Ser-381, Ser-384, and Ser-388. The Post-SET domain maps to Val-394–Asn-410. Cys-398, Cys-400, and Cys-405 together coordinate Zn(2+).

Belongs to the class V-like SAM-binding methyltransferase superfamily. Histone-lysine methyltransferase family. Suvar3-9 subfamily. As to quaternary structure, interacts with SMAD5. The large PER complex involved in the histone methylation is composed of at least PER2, CBX3, TRIM28, SUV39H1 and/or SUV39H2; CBX3 mediates the formation of the complex. Ubiquitinated by the DCX(DCAF13) E3 ubiquitin ligase complex, leading to its degradation.

The protein localises to the nucleus. Its subcellular location is the chromosome. It is found in the centromere. It carries out the reaction L-lysyl(9)-[histone H3] + 3 S-adenosyl-L-methionine = N(6),N(6),N(6)-trimethyl-L-lysyl(9)-[histone H3] + 3 S-adenosyl-L-homocysteine + 3 H(+). Its function is as follows. Histone methyltransferase that specifically trimethylates 'Lys-9' of histone H3 using monomethylated H3 'Lys-9' as substrate. H3 'Lys-9' trimethylation represents a specific tag for epigenetic transcriptional repression by recruiting HP1 (CBX1, CBX3 and/or CBX5) proteins to methylated histones. Mainly functions in heterochromatin regions, thereby playing a central role in the establishment of constitutive heterochromatin at pericentric and telomere regions. H3 'Lys-9' trimethylation is also required to direct DNA methylation at pericentric repeats. SUV39H1 is targeted to histone H3 via its interaction with RB1 and is involved in many processes, such as cell cycle regulation, transcriptional repression and regulation of telomere length. May participate in regulation of higher-order chromatin organization during spermatogenesis. Recruited by the large PER complex to the E-box elements of the circadian target genes such as PER2 itself or PER1, contributes to the conversion of local chromatin to a heterochromatin-like repressive state through H3 'Lys-9' trimethylation. The chain is Histone-lysine N-methyltransferase SUV39H2 (SUV39H2) from Macaca fascicularis (Crab-eating macaque).